Reading from the N-terminus, the 214-residue chain is Adenylate kinase (214 aa).

Residue 10-15 participates in ATP binding; sequence GAGKGT. An NMP region spans residues 30-59; it reads STGDMFRDHKARGTEIGKQVQAIMDAGGLV. AMP contacts are provided by residues threonine 31, arginine 36, 57-59, 85-88, and glutamine 92; these read GLV and GYPR. Positions 126–163 are LID; the sequence is GRRSCPRCGAVYHVSQNPPHRAGFCDRDDAALVQREDD. Arginine 127 is an ATP binding site. Residues cysteine 130 and cysteine 133 each contribute to the Zn(2+) site. 136-137 serves as a coordination point for ATP; sequence VY. Cysteine 150 and aspartate 153 together coordinate Zn(2+). Residues arginine 160 and arginine 171 each coordinate AMP. ATP is bound at residue glycine 199.

This sequence belongs to the adenylate kinase family. In terms of assembly, monomer.

It is found in the cytoplasm. The enzyme catalyses AMP + ATP = 2 ADP. It participates in purine metabolism; AMP biosynthesis via salvage pathway; AMP from ADP: step 1/1. Its function is as follows. Catalyzes the reversible transfer of the terminal phosphate group between ATP and AMP. Plays an important role in cellular energy homeostasis and in adenine nucleotide metabolism. The sequence is that of Adenylate kinase from Anaeromyxobacter dehalogenans (strain 2CP-1 / ATCC BAA-258).